Reading from the N-terminus, the 203-residue chain is Glycerol-3-phosphate acyltransferase (203 aa).

The next 5 helical transmembrane spans lie at 5-25 (VLGL…FGVV), 55-75 (KLGI…ILVA), 88-108 (FTVL…WLGF), 114-134 (VATG…AGAV), and 162-182 (FVAH…AALI).

Belongs to the PlsY family. As to quaternary structure, probably interacts with PlsX.

The protein resides in the cell inner membrane. It carries out the reaction an acyl phosphate + sn-glycerol 3-phosphate = a 1-acyl-sn-glycero-3-phosphate + phosphate. Its pathway is lipid metabolism; phospholipid metabolism. Its function is as follows. Catalyzes the transfer of an acyl group from acyl-phosphate (acyl-PO(4)) to glycerol-3-phosphate (G3P) to form lysophosphatidic acid (LPA). This enzyme utilizes acyl-phosphate as fatty acyl donor, but not acyl-CoA or acyl-ACP. This chain is Glycerol-3-phosphate acyltransferase, found in Anaeromyxobacter sp. (strain Fw109-5).